The primary structure comprises 420 residues: Putative T-box protein 33 (420 aa).

A DNA-binding region (T-box) is located at residues 93–291; sequence LWKELHYLSN…ANPTSRGDAK (199 aa). Residues 395–412 show a composition bias toward polar residues; sequence SPPLQPTATSPEASQNQI. The interval 395–420 is disordered; it reads SPPLQPTATSPEASQNQIKLEMNQYM.

Its subcellular location is the nucleus. This chain is Putative T-box protein 33 (tbx-33), found in Caenorhabditis elegans.